Reading from the N-terminus, the 186-residue chain is ATP synthase subunit delta, chloroplastic (186 aa).

This sequence belongs to the ATPase delta chain family. F-type ATPases have 2 components, F(1) - the catalytic core - and F(0) - the membrane proton channel. F(1) has five subunits: alpha(3), beta(3), gamma(1), delta(1), epsilon(1). CF(0) has four main subunits: a(1), b(1), b'(1) and c(10-14). The alpha and beta chains form an alternating ring which encloses part of the gamma chain. F(1) is attached to F(0) by a central stalk formed by the gamma and epsilon chains, while a peripheral stalk is formed by the delta, b and b' chains.

The protein localises to the plastid. It localises to the chloroplast thylakoid membrane. In terms of biological role, f(1)F(0) ATP synthase produces ATP from ADP in the presence of a proton or sodium gradient. F-type ATPases consist of two structural domains, F(1) containing the extramembraneous catalytic core and F(0) containing the membrane proton channel, linked together by a central stalk and a peripheral stalk. During catalysis, ATP synthesis in the catalytic domain of F(1) is coupled via a rotary mechanism of the central stalk subunits to proton translocation. Its function is as follows. This protein is part of the stalk that links CF(0) to CF(1). It either transmits conformational changes from CF(0) to CF(1) or is implicated in proton conduction. The protein is ATP synthase subunit delta, chloroplastic of Pyropia yezoensis (Susabi-nori).